Reading from the N-terminus, the 131-residue chain is Insulin-like 3 (131 aa).

Positions Met1–Ala20 are cleaved as a signal peptide. Intrachain disulfides connect Cys34–Cys116, Cys46–Cys129, and Cys115–Cys120. The propeptide at Pro58 to His104 is c peptide like.

The protein belongs to the insulin family. Heterodimer of a B chain and an A chain linked by two disulfide bonds. In terms of tissue distribution, expressed in prenatal and postnatal Leydig cells. Found as well in the corpus luteum, trophoblast, fetal membranes and breast.

It is found in the secreted. Seems to play a role in testicular function. May be a trophic hormone with a role in testicular descent in fetal life. Is a ligand for LGR8 receptor. This is Insulin-like 3 (INSL3) from Homo sapiens (Human).